The following is a 360-amino-acid chain: Peptide chain release factor 1 (360 aa).

Gln-237 carries the N5-methylglutamine modification.

Belongs to the prokaryotic/mitochondrial release factor family. In terms of processing, methylated by PrmC. Methylation increases the termination efficiency of RF1.

It is found in the cytoplasm. In terms of biological role, peptide chain release factor 1 directs the termination of translation in response to the peptide chain termination codons UAG and UAA. The sequence is that of Peptide chain release factor 1 from Pseudomonas putida (strain ATCC 700007 / DSM 6899 / JCM 31910 / BCRC 17059 / LMG 24140 / F1).